Consider the following 897-residue polypeptide: 3'-5' exonuclease DinG (897 aa).

The region spanning 8 to 161 (VVDLETTGNQ…DEDAATTAKL (154 aa)) is the Exonuclease domain. Positions 241–496 (SKAVDQLGLT…KAIDQLEKQR (256 aa)) constitute a Helicase ATP-binding domain. 276–283 (ASLGSGKS) contacts ATP. The DEAH box motif lies at 448–451 (DEAH). A Helicase C-terminal domain is found at 703 to 893 (NIDEYVASIV…QFGKLLRQIQ (191 aa)).

Belongs to the helicase family. DinG subfamily. Type 2 sub-subfamily.

Its function is as follows. 3'-5' exonuclease. This Staphylococcus aureus (strain MSSA476) protein is 3'-5' exonuclease DinG.